The primary structure comprises 705 residues: Polyribonucleotide nucleotidyltransferase (705 aa).

Asp486 and Asp492 together coordinate Mg(2+). The 60-residue stretch at 553–612 folds into the KH domain; it reads PRIHTMKVSQDKIRDIIGKGGATIRQLTEETGTTIEIEDDGTVKIAATSGEQAEDAINRI. The region spanning 622 to 690 is the S1 motif domain; that stretch reads GTLYTGKVVR…RQGRVRLSIK (69 aa).

Belongs to the polyribonucleotide nucleotidyltransferase family. Component of the RNA degradosome, which is a multiprotein complex involved in RNA processing and mRNA degradation. Mg(2+) is required as a cofactor.

Its subcellular location is the cytoplasm. The catalysed reaction is RNA(n+1) + phosphate = RNA(n) + a ribonucleoside 5'-diphosphate. Involved in mRNA degradation. Catalyzes the phosphorolysis of single-stranded polyribonucleotides processively in the 3'- to 5'-direction. In Colwellia psychrerythraea (strain 34H / ATCC BAA-681) (Vibrio psychroerythus), this protein is Polyribonucleotide nucleotidyltransferase.